Consider the following 448-residue polypeptide: N-succinylarginine dihydrolase (448 aa).

Substrate contacts are provided by residues A20 to S29, N111, and H138 to R139. The active site involves E175. R213 lines the substrate pocket. The active site involves H249. Residues D251 and N360 each contribute to the substrate site. C366 acts as the Nucleophile in catalysis.

Belongs to the succinylarginine dihydrolase family. As to quaternary structure, homodimer.

It catalyses the reaction N(2)-succinyl-L-arginine + 2 H2O + 2 H(+) = N(2)-succinyl-L-ornithine + 2 NH4(+) + CO2. It participates in amino-acid degradation; L-arginine degradation via AST pathway; L-glutamate and succinate from L-arginine: step 2/5. In terms of biological role, catalyzes the hydrolysis of N(2)-succinylarginine into N(2)-succinylornithine, ammonia and CO(2). The sequence is that of N-succinylarginine dihydrolase from Shigella dysenteriae serotype 1 (strain Sd197).